The primary structure comprises 438 residues: CBL-interacting protein kinase 32 (438 aa).

The region spanning 13-268 (YELGRTIGEG…IPEILEDEWF (256 aa)) is the Protein kinase domain. ATP is bound by residues 19 to 27 (IGEGTFAKV) and K42. D136 acts as the Proton acceptor in catalysis. The tract at residues 154 to 183 (DFGLSALSQQIKDDGLLHTTCGTPNYVAPE) is activation loop. The NAF domain maps to 305 to 329 (EEPEALNAFELISMSAGLNLGNLFD). The segment at 335–364 (KRETRFTSKCPPKEIVRKIEEAAKPLGFDV) is PPI.

The protein belongs to the protein kinase superfamily. CAMK Ser/Thr protein kinase family. SNF1 subfamily. Mn(2+) serves as cofactor.

The enzyme catalyses L-seryl-[protein] + ATP = O-phospho-L-seryl-[protein] + ADP + H(+). The catalysed reaction is L-threonyl-[protein] + ATP = O-phospho-L-threonyl-[protein] + ADP + H(+). In terms of biological role, CIPK serine-threonine protein kinases interact with CBL proteins. Binding of a CBL protein to the regulatory NAF domain of CIPK protein lead to the activation of the kinase in a calcium-dependent manner. The polypeptide is CBL-interacting protein kinase 32 (CIPK32) (Oryza sativa subsp. japonica (Rice)).